A 250-amino-acid chain; its full sequence is 1-(5-phosphoribosyl)-5-[(5-phosphoribosylamino)methylideneamino] imidazole-4-carboxamide isomerase (250 aa).

The active-site Proton acceptor is Asp-8. The Proton donor role is filled by Asp-131.

The protein belongs to the HisA/HisF family.

Its subcellular location is the cytoplasm. The enzyme catalyses 1-(5-phospho-beta-D-ribosyl)-5-[(5-phospho-beta-D-ribosylamino)methylideneamino]imidazole-4-carboxamide = 5-[(5-phospho-1-deoxy-D-ribulos-1-ylimino)methylamino]-1-(5-phospho-beta-D-ribosyl)imidazole-4-carboxamide. It functions in the pathway amino-acid biosynthesis; L-histidine biosynthesis; L-histidine from 5-phospho-alpha-D-ribose 1-diphosphate: step 4/9. The polypeptide is 1-(5-phosphoribosyl)-5-[(5-phosphoribosylamino)methylideneamino] imidazole-4-carboxamide isomerase (Paraburkholderia xenovorans (strain LB400)).